The chain runs to 153 residues: Nascent polypeptide-associated complex subunit beta (153 aa).

2 disordered regions span residues 1 to 40 (MSDVQERLKKLGLGARTGTGKGTPRRKVKRAPARSGADDK) and 126 to 153 (LQKEKGEDDDEIPDLVEGENFEGEPKVE). Over residues 23–32 (TPRRKVKRAP) the composition is skewed to basic residues. The 66-residue stretch at 36–101 (GADDKKLQLA…GEDKELTELV (66 aa)) folds into the NAC-A/B domain. Residues 132-147 (EDDDEIPDLVEGENFE) show a composition bias toward acidic residues.

Belongs to the NAC-beta family. Part of the nascent polypeptide-associated complex (NAC), consisting of EGD2 and EGD1. NAC associates with ribosomes via EGD1.

It localises to the cytoplasm. Its subcellular location is the nucleus. Component of the nascent polypeptide-associated complex (NAC), a dynamic component of the ribosomal exit tunnel, protecting the emerging polypeptides from interaction with other cytoplasmic proteins to ensure appropriate nascent protein targeting. The NAC complex also promotes mitochondrial protein import by enhancing productive ribosome interactions with the outer mitochondrial membrane and blocks the inappropriate interaction of ribosomes translating non-secretory nascent polypeptides with translocation sites in the membrane of the endoplasmic reticulum. EGD1 may act as a transcription factor that exert a negative effect on the expression of several genes that are transcribed by RNA polymerase II. The polypeptide is Nascent polypeptide-associated complex subunit beta (EGD1) (Gibberella zeae (strain ATCC MYA-4620 / CBS 123657 / FGSC 9075 / NRRL 31084 / PH-1) (Wheat head blight fungus)).